The primary structure comprises 42 residues: Ostricacin-4 (42 aa).

3 disulfide bridges follow: Cys8–Cys36, Cys15–Cys30, and Cys20–Cys37.

The protein resides in the secreted. In terms of biological role, has antibacterial activity against the Gram-positive bacterium S.aureus 1056 MRSA (MIC=11.48 ug/ml) and the Gram-negative bacterium E.coli O157:H7 (MIC=12.03 ug/ml). Does not have antifungal activity against the yeast C.albicans 3153A. The chain is Ostricacin-4 from Struthio camelus (Common ostrich).